A 397-amino-acid chain; its full sequence is 1-deoxy-D-xylulose 5-phosphate reductoisomerase (397 aa).

Thr10, Gly11, Ser12, Ile13, Gly36, Lys37, Asn38, and Asn124 together coordinate NADPH. 1-deoxy-D-xylulose 5-phosphate is bound at residue Lys125. Glu126 lines the NADPH pocket. Residue Asp150 coordinates Mn(2+). 1-deoxy-D-xylulose 5-phosphate contacts are provided by Ser151, Glu152, Ser186, and His209. Glu152 contacts Mn(2+). Gly215 contacts NADPH. Positions 222, 227, 228, and 231 each coordinate 1-deoxy-D-xylulose 5-phosphate. Position 231 (Glu231) interacts with Mn(2+).

Belongs to the DXR family. Homodimer. Mg(2+) is required as a cofactor. Mn(2+) serves as cofactor.

It carries out the reaction 2-C-methyl-D-erythritol 4-phosphate + NADP(+) = 1-deoxy-D-xylulose 5-phosphate + NADPH + H(+). Its pathway is isoprenoid biosynthesis; isopentenyl diphosphate biosynthesis via DXP pathway; isopentenyl diphosphate from 1-deoxy-D-xylulose 5-phosphate: step 1/6. Its function is as follows. Catalyzes the NADPH-dependent rearrangement and reduction of 1-deoxy-D-xylulose-5-phosphate (DXP) to 2-C-methyl-D-erythritol 4-phosphate (MEP). The protein is 1-deoxy-D-xylulose 5-phosphate reductoisomerase of Proteus mirabilis (strain HI4320).